Consider the following 392-residue polypeptide: Phospho-N-acetylmuramoyl-pentapeptide-transferase (392 aa).

11 helical membrane-spanning segments follow: residues 24 to 44 (YLTL…LIAG), 76 to 96 (TMGG…WFDL), 100 to 120 (FVWI…VDDW), 137 to 157 (YFWQ…SISE), 167 to 187 (FITW…GLLV), 193 to 213 (VSYP…IVGS), 225 to 245 (GLAI…AYVT), 262 to 282 (SGEL…FLWF), 289 to 309 (VFMG…IAVI), 314 to 334 (IVLA…MLQV), and 369 to 389 (QVVV…LTTL).

It belongs to the glycosyltransferase 4 family. MraY subfamily. It depends on Mg(2+) as a cofactor.

The protein localises to the cell inner membrane. The catalysed reaction is UDP-N-acetyl-alpha-D-muramoyl-L-alanyl-gamma-D-glutamyl-meso-2,6-diaminopimeloyl-D-alanyl-D-alanine + di-trans,octa-cis-undecaprenyl phosphate = di-trans,octa-cis-undecaprenyl diphospho-N-acetyl-alpha-D-muramoyl-L-alanyl-D-glutamyl-meso-2,6-diaminopimeloyl-D-alanyl-D-alanine + UMP. Its pathway is cell wall biogenesis; peptidoglycan biosynthesis. Catalyzes the initial step of the lipid cycle reactions in the biosynthesis of the cell wall peptidoglycan: transfers peptidoglycan precursor phospho-MurNAc-pentapeptide from UDP-MurNAc-pentapeptide onto the lipid carrier undecaprenyl phosphate, yielding undecaprenyl-pyrophosphoryl-MurNAc-pentapeptide, known as lipid I. The protein is Phospho-N-acetylmuramoyl-pentapeptide-transferase of Acidovorax ebreus (strain TPSY) (Diaphorobacter sp. (strain TPSY)).